Here is a 674-residue protein sequence, read N- to C-terminus: PTS system glucose-specific EIIBCA component (674 aa).

The 89-residue stretch at 1 to 89 (MASKLTTTSQ…LKLDGMKHFA (89 aa)) folds into the PTS EIIB type-1 domain. Cys28 (phosphocysteine intermediate; for EIIB activity) is an active-site residue. The PTS EIIC type-1 domain occupies 117–476 (EFLSDTFRPI…DAERDEAKAQ (360 aa)). The next 10 helical transmembrane spans lie at 126–146 (ILWA…ADTF), 162–182 (YVFL…MVGA), 193–213 (WIGA…LGSA), 225–245 (VLND…GLYW), 260–280 (MVFV…FLLG), 303–323 (FILS…GLHW), 344–364 (PMGA…LIAL), 376–396 (LGGM…YGVL), 409–429 (GCLV…AFVF), and 442–462 (LGYT…VLFF). A PTS EIIA type-1 domain is found at 542-646 (DPIFAAGKLG…PLITPVVVSN (105 aa)). The active-site Tele-phosphohistidine intermediate; for EIIA activity is His594.

It is found in the cell membrane. It carries out the reaction N(pros)-phospho-L-histidyl-[protein] + D-glucose(out) = D-glucose 6-phosphate(in) + L-histidyl-[protein]. Functionally, the phosphoenolpyruvate-dependent sugar phosphotransferase system (sugar PTS), a major carbohydrate active transport system, catalyzes the phosphorylation of incoming sugar substrates concomitantly with their translocation across the cell membrane. This system is involved in glucose transport. The protein is PTS system glucose-specific EIIBCA component (ptsG) of Corynebacterium glutamicum (Brevibacterium saccharolyticum).